The chain runs to 123 residues: Large ribosomal subunit protein uL14 (123 aa).

The protein belongs to the universal ribosomal protein uL14 family. As to quaternary structure, part of the 50S ribosomal subunit. Forms a cluster with proteins L3 and L19. In the 70S ribosome, L14 and L19 interact and together make contacts with the 16S rRNA in bridges B5 and B8.

Its function is as follows. Binds to 23S rRNA. Forms part of two intersubunit bridges in the 70S ribosome. This is Large ribosomal subunit protein uL14 from Buchnera aphidicola subsp. Acyrthosiphon kondoi (Acyrthosiphon kondoi symbiotic bacterium).